Reading from the N-terminus, the 148-residue chain is Iron/alpha-ketoglutarate-dependent dioxygenase ausU (148 aa).

Fe cation contacts are provided by His-45 and Asp-47.

It belongs to the PhyH family. As to quaternary structure, homodimer. The cofactor is Fe cation.

Its pathway is secondary metabolite biosynthesis; terpenoid biosynthesis. In terms of biological role, iron/alpha-ketoglutarate-dependent dioxygenase; part of the gene cluster B that mediates the biosynthesis of austinol and dehydroaustinol, two fungal meroterpenoids. The first step of the pathway is the synthesis of 3,5-dimethylorsellinic acid by the polyketide synthase ausA. 3,5-dimethylorsellinic acid is then prenylated by the polyprenyl transferase ausN. Further epoxidation by the FAD-dependent monooxygenase ausM and cyclization by the probable terpene cyclase ausL lead to the formation of protoaustinoid A. Protoaustinoid A is then oxidized to spiro-lactone preaustinoid A3 by the combined action of the FAD-binding monooxygenases ausB and ausC, and the dioxygenase ausE. Acid-catalyzed keto-rearrangement and ring contraction of the tetraketide portion of preaustinoid A3 by ausJ lead to the formation of preaustinoid A4. The aldo-keto reductase ausK, with the help of ausH, is involved in the next step by transforming preaustinoid A4 into isoaustinone which is in turn hydroxylated by the P450 monooxygenase ausI to form austinolide. Finally, the cytochrome P450 monooxygenase ausG modifies austinolide to austinol. Austinol can be further modified to dehydroaustinol which forms a diffusible complex with diorcinol that initiates conidiation. Due to genetic rearrangements of the clusters and the subsequent loss of some enzymes, the end products of the Emericella nidulans austinoid biosynthesis clusters are austinol and dehydroaustinol, even if additional enzymes, such as the O-acetyltransferase ausQ and the cytochrome P450 monooxygenase ausR are still functional. In Emericella nidulans (strain FGSC A4 / ATCC 38163 / CBS 112.46 / NRRL 194 / M139) (Aspergillus nidulans), this protein is Iron/alpha-ketoglutarate-dependent dioxygenase ausU.